Reading from the N-terminus, the 714-residue chain is DNA ligase (714 aa).

NAD(+) is bound by residues 59-63 (DYEYD), 108-109 (SL), and Glu139. Lys141 functions as the N6-AMP-lysine intermediate in the catalytic mechanism. NAD(+) contacts are provided by Arg162, Glu200, Lys325, and Lys349. The Zn(2+) site is built by Cys443, Cys446, Cys461, and Cys466. The 90-residue stretch at 624–713 (VVENIFEGKT…IPDDLKDKVH (90 aa)) folds into the BRCT domain.

This sequence belongs to the NAD-dependent DNA ligase family. LigA subfamily. Mg(2+) is required as a cofactor. It depends on Mn(2+) as a cofactor.

It catalyses the reaction NAD(+) + (deoxyribonucleotide)n-3'-hydroxyl + 5'-phospho-(deoxyribonucleotide)m = (deoxyribonucleotide)n+m + AMP + beta-nicotinamide D-nucleotide.. DNA ligase that catalyzes the formation of phosphodiester linkages between 5'-phosphoryl and 3'-hydroxyl groups in double-stranded DNA using NAD as a coenzyme and as the energy source for the reaction. It is essential for DNA replication and repair of damaged DNA. This is DNA ligase from Persephonella marina (strain DSM 14350 / EX-H1).